We begin with the raw amino-acid sequence, 186 residues long: Protein Syd (186 aa).

It belongs to the Syd family.

It is found in the cell inner membrane. In terms of biological role, interacts with the SecY protein in vivo. May bind preferentially to an uncomplexed state of SecY, thus functioning either as a chelating agent for excess SecY in the cell or as a regulatory factor that negatively controls the translocase function. The chain is Protein Syd from Pseudoalteromonas atlantica (strain T6c / ATCC BAA-1087).